Here is a 126-residue protein sequence, read N- to C-terminus: FCS-Like Zinc finger 17 (126 aa).

The FLZ-type zinc-finger motif lies at 41-85 (CFLKTCHLCNKQLHQDKDVYMYRGDLGFCSRECRESQMLIDDRKE).

The protein belongs to the FLZ family. Interacts with KIN10 and KIN11 via its FLZ-type zinc finger domain. Forms heterodimer with FLZ2 in vitro.

Its subcellular location is the nucleus. It localises to the cytoplasm. Its function is as follows. May act as an adapter to facilitate the interaction of SnRK1 complex with effector proteins, conferring tissue- and stimulus-type specific differences in the SnRK1 regulation pathway. The protein is FCS-Like Zinc finger 17 of Arabidopsis thaliana (Mouse-ear cress).